The following is a 461-amino-acid chain: NADH-ubiquinone oxidoreductase chain 4 (461 aa).

The next 13 membrane-spanning stretches (helical) occupy residues 20–42 (PAWL…LTWL), 61–81 (PLST…ILAS), 93–113 (QRSF…AFGA), 114–134 (TEII…LIII), 147–167 (GTYF…ALLM), 197–217 (WTAC…HLWL), 225–245 (PIAG…YGMM), 258–278 (LAYP…SICL), 285–304 (SLIA…GILT), 309–331 (GFTG…FCLA), 351–371 (VILP…LALP), 393–413 (TLTM…HMFL), and 436–456 (LLMT…ELIW).

Belongs to the complex I subunit 4 family.

The protein localises to the mitochondrion membrane. It catalyses the reaction a ubiquinone + NADH + 5 H(+)(in) = a ubiquinol + NAD(+) + 4 H(+)(out). Core subunit of the mitochondrial membrane respiratory chain NADH dehydrogenase (Complex I) that is believed to belong to the minimal assembly required for catalysis. Complex I functions in the transfer of electrons from NADH to the respiratory chain. The immediate electron acceptor for the enzyme is believed to be ubiquinone. In Latimeria chalumnae (Coelacanth), this protein is NADH-ubiquinone oxidoreductase chain 4 (MT-ND4).